Consider the following 287-residue polypeptide: MRIILITGISGSGKSVGLTSLEDAGYFCVDNLPPTLLRALVATRQEEHADKLAVAMDARSASSLIGLPADIAWLQSQGHEVKVLFLTAKTDSLIARFSETRRSHPLSHRGFSSTAAEDRRTLTECIREEREMLSGVEEISHVIDTSGMSANKLRGWIKALIESDHSPLTVLFESFAFKFGVPLDADLVFDVRMLPNPHYDSQLRPLTGRDAPVQAFLQDQPDATALLADIRGFVEKWLPAFKKDNRSYLTVAIGCTGGQHRSVYMVEQLAAHFRAHEHVILRHRELD.

8 to 15 (GISGSGKS) contacts ATP. Position 57–60 (57–60 (DARS)) interacts with GTP.

Belongs to the RapZ-like family.

Displays ATPase and GTPase activities. The protein is Nucleotide-binding protein mma_3120 of Janthinobacterium sp. (strain Marseille) (Minibacterium massiliensis).